The chain runs to 411 residues: MAVIFRSISGCITSAESVLITQQSHEELYRVLRHNKQVSSTEQKVVVVSVSPQSRASLAAHYGIGSSEVARKLTSFLKHLGVHHVFDTAFSRSFSLIESQREFLQRFSQREADKKALPMLASACPGWICYAEKTHGEFILPYISTTRSPQQIMGSLVKGYFASQKGVSPQMIYHVTVMPCYDKKLEASRPDFYLSEHETREVDCVITSGEVLKMLEEEKVSLRDVQPAPLDTMFSNVCGEELLGHAGSGSGGYLHHIYKHAAKQLFGVDVDELTYKTMKNKDFQEVTLEKDGQVLLKFAAVYGFRNIQNLVQKLKRGKSPYHFVEVMACPSGCLNGGGQLKPSADQSNKELLQQVEEVYRSEHPSVPEDDSQVAELYQSWLESVGEEKARQLLHTQYHAVEKTANGLSIKW.

The [4Fe-4S] cluster site is built by C11, C124, C180, C329, and C333.

The protein belongs to the NARF family. In terms of assembly, component of the CIA complex.

Component of the cytosolic iron-sulfur protein assembly (CIA) complex, a multiprotein complex that mediates the incorporation of iron-sulfur cluster into extramitochondrial Fe/S proteins. The protein is Cytosolic Fe-S cluster assembly factor narfl (narfl) of Danio rerio (Zebrafish).